We begin with the raw amino-acid sequence, 352 residues long: Alanine racemase (352 aa).

The active-site Proton acceptor; specific for D-alanine is the Lys33. At Lys33 the chain carries N6-(pyridoxal phosphate)lysine. Arg129 provides a ligand contact to substrate. Catalysis depends on Tyr250, which acts as the Proton acceptor; specific for L-alanine. Met298 contributes to the substrate binding site.

Belongs to the alanine racemase family. Requires pyridoxal 5'-phosphate as cofactor.

The catalysed reaction is L-alanine = D-alanine. It functions in the pathway amino-acid biosynthesis; D-alanine biosynthesis; D-alanine from L-alanine: step 1/1. In terms of biological role, catalyzes the interconversion of L-alanine and D-alanine. May also act on other amino acids. The chain is Alanine racemase (alr) from Neisseria meningitidis serogroup B (strain ATCC BAA-335 / MC58).